The sequence spans 258 residues: Probable N-acetylglucosaminyl-phosphatidylinositol de-N-acetylase (258 aa).

The segment at 147-170 is disordered; sequence KSSSTTTTSTTSSSSSSSSLSNRT. Residues 148–170 are compositionally biased toward low complexity; the sequence is SSSTTTTSTTSSSSSSSSLSNRT.

This sequence belongs to the PIGL family.

It localises to the endoplasmic reticulum membrane. The enzyme catalyses a 6-(N-acetyl-alpha-D-glucosaminyl)-1-(1,2-diacyl-sn-glycero-3-phospho)-1D-myo-inositol + H2O = a 6-(alpha-D-glucosaminyl)-1-(1,2-diacyl-sn-glycero-3-phospho)-1D-myo-inositol + acetate. Its pathway is glycolipid biosynthesis; glycosylphosphatidylinositol-anchor biosynthesis. Its function is as follows. Involved in the second step of GPI biosynthesis. De-N-acetylation of N-acetylglucosaminyl-phosphatidylinositol. This Dictyostelium discoideum (Social amoeba) protein is Probable N-acetylglucosaminyl-phosphatidylinositol de-N-acetylase (pigl).